The chain runs to 432 residues: Glutamate-1-semialdehyde 2,1-aminomutase 2 (432 aa).

Residue Lys268 is modified to N6-(pyridoxal phosphate)lysine.

This sequence belongs to the class-III pyridoxal-phosphate-dependent aminotransferase family. HemL subfamily. In terms of assembly, homodimer. Requires pyridoxal 5'-phosphate as cofactor.

It localises to the cytoplasm. The enzyme catalyses (S)-4-amino-5-oxopentanoate = 5-aminolevulinate. It functions in the pathway porphyrin-containing compound metabolism; protoporphyrin-IX biosynthesis; 5-aminolevulinate from L-glutamyl-tRNA(Glu): step 2/2. The sequence is that of Glutamate-1-semialdehyde 2,1-aminomutase 2 from Listeria monocytogenes serotype 4b (strain CLIP80459).